Here is a 201-residue protein sequence, read N- to C-terminus: Small ribosomal subunit protein uS4 (201 aa).

Residues 91–157 (SRLDNVVYRA…LPFQVARETV (67 aa)) form the S4 RNA-binding domain.

The protein belongs to the universal ribosomal protein uS4 family. As to quaternary structure, part of the 30S ribosomal subunit. Contacts protein S5. The interaction surface between S4 and S5 is involved in control of translational fidelity.

Its function is as follows. One of the primary rRNA binding proteins, it binds directly to 16S rRNA where it nucleates assembly of the body of the 30S subunit. Functionally, with S5 and S12 plays an important role in translational accuracy. The polypeptide is Small ribosomal subunit protein uS4 (Rhodococcus erythropolis (strain PR4 / NBRC 100887)).